The sequence spans 969 residues: Alpha-glucosidase (969 aa).

An N-terminal signal peptide occupies residues Met-1–Gly-24. 14 N-linked (GlcNAc...) asparagine glycosylation sites follow: Asn-37, Asn-67, Asn-99, Asn-116, Asn-139, Asn-146, Asn-209, Asn-245, Asn-249, Asn-331, Asn-406, Asn-429, Asn-462, and Asn-470. The active-site Nucleophile is Asp-481. Residue Glu-484 is part of the active site. N-linked (GlcNAc...) asparagine glycans are attached at residues Asn-520, Asn-523, and Asn-589. Catalysis depends on Asp-647, which acts as the Proton donor. N-linked (GlcNAc...) asparagine glycosylation is found at Asn-648, Asn-801, Asn-810, Asn-821, Asn-885, Asn-915, Asn-934, Asn-942, Asn-954, and Asn-966.

Belongs to the glycosyl hydrolase 31 family.

It is found in the secreted. The enzyme catalyses Hydrolysis of terminal, non-reducing (1-&gt;4)-linked alpha-D-glucose residues with release of alpha-D-glucose.. In terms of biological role, hydrolyzes malto-oligosaccharides, but has a low activity toward soluble starch. This chain is Alpha-glucosidase (agl1), found in Schizosaccharomyces pombe (strain 972 / ATCC 24843) (Fission yeast).